Reading from the N-terminus, the 273-residue chain is tRNA (guanine-N(7)-)-methyltransferase A (273 aa).

S-adenosyl-L-methionine-binding residues include Gly86, Glu109, Arg111, Asn142, Ala143, and Leu162. Residue Asp165 is part of the active site. The tract at residues 166–174 (PHFKKTKHK) is alphaC helix. Residues Thr240 and Glu242 each contribute to the S-adenosyl-L-methionine site. Residues 240–248 (TEEGKKVQR) are alpha6 helix.

The protein belongs to the class I-like SAM-binding methyltransferase superfamily. TrmB family. Catalytic component of the METTL1-WDR4 complex, composed of mettl1 and wdr4.

The protein localises to the nucleus. The enzyme catalyses guanosine(46) in tRNA + S-adenosyl-L-methionine = N(7)-methylguanosine(46) in tRNA + S-adenosyl-L-homocysteine. It carries out the reaction a guanosine in mRNA + S-adenosyl-L-methionine = an N(7)-methylguanosine in mRNA + S-adenosyl-L-homocysteine. The catalysed reaction is a guanosine in miRNA + S-adenosyl-L-methionine = an N(7)-methylguanosine in miRNA + S-adenosyl-L-homocysteine. It participates in tRNA modification; N(7)-methylguanine-tRNA biosynthesis. In terms of biological role, catalytic component of METTL1-WDR4 methyltransferase complex that mediates the formation of N(7)-methylguanine in a subset of RNA species, such as tRNAs, mRNAs and microRNAs (miRNAs). Catalyzes the formation of N(7)-methylguanine at position 46 (m7G46) in a large subset of tRNAs that contain the 5'-RAGGU-3' motif within the variable loop. M7G46 interacts with C13-G22 in the D-loop to stabilize tRNA tertiary structure and protect tRNAs from decay. Also acts as a methyltransferase for a subset of internal N(7)-methylguanine in mRNAs. Internal N(7)-methylguanine methylation of mRNAs in response to stress promotes their relocalization to stress granules, thereby suppressing their translation. Also methylates a specific subset of miRNAs. The sequence is that of tRNA (guanine-N(7)-)-methyltransferase A (mettl1-A) from Xenopus tropicalis (Western clawed frog).